Consider the following 289-residue polypeptide: 2-hydroxy-6-oxononadienedioate/2-hydroxy-6-oxononatrienedioate hydrolase 1 (289 aa).

The AB hydrolase-1 domain occupies 39-275 (TVVMLHGSGP…RCGHWAQWEH (237 aa)). His269 acts as the Proton acceptor in catalysis.

It belongs to the AB hydrolase superfamily. MhpC family. Homodimer.

The catalysed reaction is (2Z,4E)-2-hydroxy-6-oxonona-2,4-dienedioate + H2O = (2Z)-2-hydroxypenta-2,4-dienoate + succinate + H(+). It catalyses the reaction (2Z,4E,7E)-2-hydroxy-6-oxonona-2,4,7-trienedioate + H2O = (2Z)-2-hydroxypenta-2,4-dienoate + fumarate + H(+). It participates in aromatic compound metabolism; 3-phenylpropanoate degradation. Catalyzes the cleavage of the C5-C6 bond of 2-hydroxy-6-oxononadienedioate and 2-hydroxy-6-oxononatrienedioate, a dienol ring fission product of the bacterial meta-cleavage pathway for degradation of phenylpropionic acid. The sequence is that of 2-hydroxy-6-oxononadienedioate/2-hydroxy-6-oxononatrienedioate hydrolase 1 from Dechloromonas aromatica (strain RCB).